The chain runs to 167 residues: Peptide deformylase (167 aa).

Fe cation-binding residues include Cys-91 and His-133. The active site involves Glu-134. His-137 contributes to the Fe cation binding site.

The protein belongs to the polypeptide deformylase family. It depends on Fe(2+) as a cofactor.

The catalysed reaction is N-terminal N-formyl-L-methionyl-[peptide] + H2O = N-terminal L-methionyl-[peptide] + formate. In terms of biological role, removes the formyl group from the N-terminal Met of newly synthesized proteins. Requires at least a dipeptide for an efficient rate of reaction. N-terminal L-methionine is a prerequisite for activity but the enzyme has broad specificity at other positions. The polypeptide is Peptide deformylase (Baumannia cicadellinicola subsp. Homalodisca coagulata).